The primary structure comprises 160 residues: MPAPILPLIEAAAHWPARGALLGLDLGTKTIGVAVSDPDRKLATGIETVARTAFTADAKRVLALAAERSACGFVLGLPLNMDGSEGPRAQSTRAFARNFARLTELPIGLWDERLSTAAVERALIANDVSRAKRAKIIDEHAAIYILQGALDRLVALNRAG.

The protein belongs to the YqgF nuclease family.

It localises to the cytoplasm. Could be a nuclease involved in processing of the 5'-end of pre-16S rRNA. The protein is Putative pre-16S rRNA nuclease of Rhodopseudomonas palustris (strain BisB5).